The sequence spans 144 residues: Peptide methionine sulfoxide reductase MsrB (144 aa).

Residues 1 to 12 (MDKQQGELRQRL) show a composition bias toward basic and acidic residues. A disordered region spans residues 1-25 (MDKQQGELRQRLTPEQYAVTQEAAT). Residues 5–128 (QGELRQRLTP…NSAALKFIPV (124 aa)) enclose the MsrB domain. Catalysis depends on cysteine 117, which acts as the Nucleophile.

This sequence belongs to the MsrB Met sulfoxide reductase family.

It carries out the reaction L-methionyl-[protein] + [thioredoxin]-disulfide + H2O = L-methionyl-(R)-S-oxide-[protein] + [thioredoxin]-dithiol. The chain is Peptide methionine sulfoxide reductase MsrB from Lactiplantibacillus plantarum (strain ATCC BAA-793 / NCIMB 8826 / WCFS1) (Lactobacillus plantarum).